We begin with the raw amino-acid sequence, 1269 residues long: DNA-directed RNA polymerase subunit beta (1269 aa).

It belongs to the RNA polymerase beta chain family. The RNAP catalytic core consists of 2 alpha, 1 beta, 1 beta' and 1 omega subunit. When a sigma factor is associated with the core the holoenzyme is formed, which can initiate transcription.

The catalysed reaction is RNA(n) + a ribonucleoside 5'-triphosphate = RNA(n+1) + diphosphate. Its function is as follows. DNA-dependent RNA polymerase catalyzes the transcription of DNA into RNA using the four ribonucleoside triphosphates as substrates. This is DNA-directed RNA polymerase subunit beta from Porphyromonas gingivalis (strain ATCC BAA-308 / W83).